The following is a 260-amino-acid chain: Type III pantothenate kinase (260 aa).

6 to 13 (DAGNTNIV) provides a ligand contact to ATP. A substrate-binding site is contributed by 108–111 (GADR). Asp-110 (proton acceptor) is an active-site residue. Asp-130 serves as a coordination point for K(+). Thr-133 serves as a coordination point for ATP. Residue Thr-187 coordinates substrate.

The protein belongs to the type III pantothenate kinase family. In terms of assembly, homodimer. It depends on NH4(+) as a cofactor. K(+) serves as cofactor.

The protein resides in the cytoplasm. The catalysed reaction is (R)-pantothenate + ATP = (R)-4'-phosphopantothenate + ADP + H(+). It functions in the pathway cofactor biosynthesis; coenzyme A biosynthesis; CoA from (R)-pantothenate: step 1/5. Catalyzes the phosphorylation of pantothenate (Pan), the first step in CoA biosynthesis. This chain is Type III pantothenate kinase, found in Rhizorhabdus wittichii (strain DSM 6014 / CCUG 31198 / JCM 15750 / NBRC 105917 / EY 4224 / RW1) (Sphingomonas wittichii).